Here is a 426-residue protein sequence, read N- to C-terminus: Crinkler effector protein 4 (426 aa).

Residues 20-57 (VEIDDSAKVSKLKKVIKEENPATITCDAKDLQLFLAKK) are LQLFLAK domain. Positions 59–107 (DAWLDGAGAAAVELDEHGHPQGCVQMDPTLWVKNPKHFGDNFQPGEGQV) are DWL domain. An HVLVXXP motif motif is present at residues 108–114 (HVLVVVP). An effector domain region spans residues 115–426 (EGVVGSASET…RSIPTLSYFS (312 aa)).

This sequence belongs to the Crinkler effector family.

It localises to the secreted. The protein resides in the host nucleus. Its function is as follows. Secreted effector that is critical to pathogenesis by suppressing plant immune responsess. Promotes Phytophthora infection by suppressing the H(2)O(2) accumulation and callose deposition. May induce cell death by regulating expression of cell death-related genes. The chain is Crinkler effector protein 4 from Phytophthora capsici.